Here is a 534-residue protein sequence, read N- to C-terminus: Lariat debranching enzyme A (534 aa).

The a divalent metal cation site is built by cysteine 8, histidine 10, aspartate 39, and asparagine 84. A lariat recognition loop region spans residues 124 to 154 (SGIFKSHDYRKGHFERPPYSKDTVRSAYHVR). A divalent metal cation contacts are provided by histidine 174, histidine 226, and histidine 228. 2 disordered regions span residues 386–439 (EEEK…QEDE) and 469–534 (SMAV…DEDE). Residues 388 to 400 (EKEDFDMTEDNEA) are compositionally biased toward acidic residues. The span at 413 to 424 (STDTSILSTSVN) shows a compositional bias: polar residues. The segment covering 428–439 (ITLEDDDEQEDE) has biased composition (acidic residues). Basic and acidic residues predominate over residues 484-499 (ELDRSESSQTEGEGKQ).

Belongs to the lariat debranching enzyme family. Fe(2+) is required as a cofactor. The cofactor is Zn(2+). Requires Mn(2+) as cofactor.

It localises to the nucleus. Its activity is regulated as follows. Active in presence of diverse metals including Fe(2+), Zn(2+), Mn(2+). Also activated by Ca(2+). Binds two metal cations in two adjacent alpha and beta metal-binding pockets. Functionally, cleaves the 2'-5' phosphodiester linkage at the branch point of excised lariat intron RNA and converts them into linear molecules that can be subsequently degraded, thereby facilitating ribonucleotide turnover. Linked to its role in pre-mRNA processing mechanism, may also participate in retrovirus replication and have an antiviral cell-intrinsic defense function. This chain is Lariat debranching enzyme A (dbr1-a), found in Xenopus laevis (African clawed frog).